A 277-amino-acid polypeptide reads, in one-letter code: Protein HEAT-INDUCED TAS1 TARGET 1 (277 aa).

Belongs to the heat induced plant HTT protein family. In terms of assembly, interacts with the heat shock proteins HSP70-14 and At2g33735/HSP40, and with NFYC2 in both cytoplasm and nucleus. In terms of tissue distribution, expressed ubiquitously, including in seedlings, leaves, stems, inflorescences and siliques.

It is found in the cytoplasm. It localises to the nucleus. Its function is as follows. Mediates both basal and acquired thermotolerance via HSFA1s-directed pathways (e.g. HSFA1A, HSFA1B, and HSFA1D). Triggers the expression of HSFA1A and HSFA1B. In Arabidopsis thaliana (Mouse-ear cress), this protein is Protein HEAT-INDUCED TAS1 TARGET 1.